Here is a 760-residue protein sequence, read N- to C-terminus: Serine/threonine-protein kinase PknG (760 aa).

The disordered stretch occupies residues M1–L31. The region spanning Y161–L403 is the Protein kinase domain. Residues I167–V175 and K191 contribute to the ATP site. Residue D286 is the Proton acceptor of the active site.

This sequence belongs to the protein kinase superfamily. Ser/Thr protein kinase family. Interacts with GarA in vitro.

The enzyme catalyses L-seryl-[protein] + ATP = O-phospho-L-seryl-[protein] + ADP + H(+). It carries out the reaction L-threonyl-[protein] + ATP = O-phospho-L-threonyl-[protein] + ADP + H(+). In Mycolicibacterium smegmatis (strain ATCC 700084 / mc(2)155) (Mycobacterium smegmatis), this protein is Serine/threonine-protein kinase PknG (pknG).